A 113-amino-acid chain; its full sequence is Nucleoid-associated protein CLH_3225 (113 aa).

Residues 1–14 (MAKGGFPGGFGGGN) show a composition bias toward gly residues. Positions 1–31 (MAKGGFPGGFGGGNMNNLMKQAQKLQKQMED) are disordered.

It belongs to the YbaB/EbfC family. In terms of assembly, homodimer.

It is found in the cytoplasm. It localises to the nucleoid. Its function is as follows. Binds to DNA and alters its conformation. May be involved in regulation of gene expression, nucleoid organization and DNA protection. The chain is Nucleoid-associated protein CLH_3225 from Clostridium botulinum (strain Alaska E43 / Type E3).